The following is a 280-amino-acid chain: Hydroxyethylthiazole kinase (280 aa).

M58 provides a ligand contact to substrate. R129 contacts ATP. Residue A206 coordinates substrate.

It belongs to the Thz kinase family. The cofactor is Mg(2+).

The enzyme catalyses 5-(2-hydroxyethyl)-4-methylthiazole + ATP = 4-methyl-5-(2-phosphooxyethyl)-thiazole + ADP + H(+). Its pathway is cofactor biosynthesis; thiamine diphosphate biosynthesis; 4-methyl-5-(2-phosphoethyl)-thiazole from 5-(2-hydroxyethyl)-4-methylthiazole: step 1/1. Its function is as follows. Thiazole kinase involved in thiamine salvage pathway. The polypeptide is Hydroxyethylthiazole kinase (THIM) (Zea mays (Maize)).